The chain runs to 433 residues: Homoserine dehydrogenase (433 aa).

2 residues coordinate NADPH: Thr-13 and Val-14. NAD(+) is bound by residues Val-14 and Val-33. Position 14 (Val-14) interacts with NADP(+). Residues Lys-45 and Lys-105 each coordinate NADPH. The NADP(+) site is built by Lys-45 and Lys-105. Residues Glu-129, Val-132, Gly-134, and Ile-136 each contribute to the Na(+) site. Gly-187 and Glu-190 together coordinate NADP(+). Glu-190 and Asp-201 together coordinate L-homoserine. The active-site Proton donor is the Lys-205. Gly-302 lines the NADPH pocket. Residue Gly-302 participates in NAD(+) binding. An NADP(+)-binding site is contributed by Gly-302. Positions 350–426 (FLRIHVKDEV…VVQEVKSTYR (77 aa)) constitute an ACT domain.

It belongs to the homoserine dehydrogenase family. Homotetramer. Requires a metal cation as cofactor.

Its subcellular location is the cytoplasm. It is found in the secreted. It catalyses the reaction L-homoserine + NADP(+) = L-aspartate 4-semialdehyde + NADPH + H(+). It functions in the pathway amino-acid biosynthesis; L-methionine biosynthesis via de novo pathway; L-homoserine from L-aspartate: step 3/3. Its pathway is amino-acid biosynthesis; L-threonine biosynthesis; L-threonine from L-aspartate: step 3/5. Feedback inhibition by threonine. Activated by sodium ions. Its function is as follows. Catalyzes the conversion of L-aspartate-beta-semialdehyde (L-Asa) to L-homoserine (L-Hse), the third step in the biosynthesis of threonine and methionine from aspartate. Utilizes NADPH but not NADH as coenzyme. The sequence is that of Homoserine dehydrogenase (hom) from Bacillus subtilis (strain 168).